Here is a 201-residue protein sequence, read N- to C-terminus: MSENYSFSLRKFKLVFLGEQSVGKTSLITRFMYDQFDNTYQATIGIDFLSKTMYLEDRTVRLQLWDTAGQERFRSLIPSYIRDSSVAIIVYDITNHNSFVNTEKWIEDVRAERGDDVIIVLVGNKTDLADKRQVTQEEGEKKAKELKIMHMETSAKAGHNVKLLFRKIAQMLPGMENVETQSTQMIDVSIQPNENESSCNC.

Position 18-25 (18-25) interacts with GTP; the sequence is GEQSVGKT. Positions 40–48 match the Effector region motif; it reads YQATIGIDF. GTP is bound by residues 66–70 and 124–127; these read DTAGQ and NKTD. Residues Cys199 and Cys201 are each lipidated (S-geranylgeranyl cysteine). Cys201 carries the cysteine methyl ester modification.

The protein belongs to the small GTPase superfamily. Rab family.

Its subcellular location is the endosome membrane. It is found in the golgi apparatus membrane. It localises to the nucleus. The protein localises to the cytoplasm. The protein resides in the cytosol. Functionally, has a role in retrograde traffricking of proteins from the endosome to the Golgi. Involved in protein transport to the plasma membrane. Involved in the secretory pathway where it has a role in acid phosphatase secretion. Required also in normal glycosylation trafficking pathways. The polypeptide is GTP-binding protein ryh1 (ryh1) (Schizosaccharomyces pombe (strain 972 / ATCC 24843) (Fission yeast)).